Here is a 309-residue protein sequence, read N- to C-terminus: Vomeronasal type-1 receptor 46 (309 aa).

The Extracellular segment spans residues Met-1–Glu-20. The chain crosses the membrane as a helical span at residues Val-21–Gly-41. Residues Glu-42 to Leu-50 are Cytoplasmic-facing. A helical transmembrane segment spans residues Tyr-51 to Val-71. At Asp-72–Cys-85 the chain is on the extracellular side. An intrachain disulfide couples Cys-85 to Cys-171. The chain crosses the membrane as a helical span at residues Thr-86 to Leu-106. Over Asn-107 to Gly-134 the chain is Cytoplasmic. A helical transmembrane segment spans residues Ala-135–Ala-155. The Extracellular portion of the chain corresponds to Ser-156–Glu-192. The N-linked (GlcNAc...) asparagine glycan is linked to Asn-158. Residues Ala-193–His-213 traverse the membrane as a helical segment. Topologically, residues Lys-214–Arg-237 are cytoplasmic. A helical transmembrane segment spans residues Thr-238–Tyr-258. The Extracellular segment spans residues Ser-259 to Ser-267. Residues Ile-268–Phe-288 traverse the membrane as a helical segment. Topologically, residues Ile-289 to Ile-309 are cytoplasmic.

The protein belongs to the G-protein coupled receptor 1 family.

Its subcellular location is the cell membrane. Functionally, putative pheromone receptor implicated in the regulation of social and reproductive behavior. This is Vomeronasal type-1 receptor 46 (Vmn1r46) from Mus musculus (Mouse).